The following is a 254-amino-acid chain: Probable membrane transporter protein YjnA (254 aa).

A run of 6 helical transmembrane segments spans residues 5–25, 75–95, 105–125, 143–163, 187–207, and 209–229; these read IILMGLFVGALVGLTGVGGAA, AIGSIPSASLAIGILHLFPAF, HALGYVLTLVAISIIVRLFLD, ALTILIGVVFGFIVGLTSIGS, IAHAFLLVTAAGILNASFGSV, and YMLAANLLLGSIPGVLIGSHL.

Belongs to the 4-toluene sulfonate uptake permease (TSUP) (TC 2.A.102) family.

The protein resides in the cell membrane. This is Probable membrane transporter protein YjnA (yjnA) from Bacillus subtilis (strain 168).